The primary structure comprises 121 residues: UPF0102 protein XF_0554 (121 aa).

The protein belongs to the UPF0102 family.

This is UPF0102 protein XF_0554 from Xylella fastidiosa (strain 9a5c).